The primary structure comprises 179 residues: NAD(P)H-quinone oxidoreductase subunit J (179 aa).

The protein belongs to the complex I 30 kDa subunit family. NDH-1 can be composed of about 15 different subunits; different subcomplexes with different compositions have been identified which probably have different functions. In terms of processing, in at one experiment the initiator methionine has been seen to be kept and removed.

Its subcellular location is the cellular thylakoid membrane. The catalysed reaction is a plastoquinone + NADH + (n+1) H(+)(in) = a plastoquinol + NAD(+) + n H(+)(out). It catalyses the reaction a plastoquinone + NADPH + (n+1) H(+)(in) = a plastoquinol + NADP(+) + n H(+)(out). Its function is as follows. NDH-1 shuttles electrons from an unknown electron donor, via FMN and iron-sulfur (Fe-S) centers, to quinones in the respiratory and/or the photosynthetic chain. The immediate electron acceptor for the enzyme in this species is believed to be plastoquinone. Couples the redox reaction to proton translocation, and thus conserves the redox energy in a proton gradient. Cyanobacterial NDH-1 also plays a role in inorganic carbon-concentration. The protein is NAD(P)H-quinone oxidoreductase subunit J of Synechocystis sp. (strain ATCC 27184 / PCC 6803 / Kazusa).